A 184-amino-acid polypeptide reads, in one-letter code: MLPLYVVNNHGQFNHLILRTLRDMDIEATMISNETPPAEVARGCRGIVLGGGPTLERAGVASAYLDLGLPVLGICLGLHIMATARGGAIRRGASGGFGAVEVEIFEQNPLLRGYPDRMQVWASHADEVSVVPEGFVRLAGSSICGVEAMASPDEHLYGIQWHPEVSHTVNGRLLFENFDGICSE.

In terms of domain architecture, Glutamine amidotransferase type-1 spans Pro3–Glu184. The active-site Nucleophile is Cys75. Catalysis depends on residues His162 and Glu164.

In terms of assembly, heterodimer composed of a glutamine amidotransferase subunit (A) and a GMP-binding subunit (B).

It catalyses the reaction XMP + L-glutamine + ATP + H2O = GMP + L-glutamate + AMP + diphosphate + 2 H(+). Its pathway is purine metabolism; GMP biosynthesis; GMP from XMP (L-Gln route): step 1/1. Its function is as follows. Catalyzes the synthesis of GMP from XMP. This chain is GMP synthase [glutamine-hydrolyzing] subunit A, found in Methanoculleus marisnigri (strain ATCC 35101 / DSM 1498 / JR1).